The chain runs to 459 residues: Ammonium transporter Rh type B (459 aa).

The Cytoplasmic segment spans residues 1–10 (MAESTNLRLR). Residues 11–31 (LPLICIILEVILIILFGVLVE) traverse the membrane as a helical segment. Over 32–58 (YNDDTDAKKWNKNNSTDPATNEFYYRY) the chain is Extracellular. Asn45 carries N-linked (GlcNAc...) asparagine glycosylation. Residues 59-79 (PSFQDVHVMIFVGFGFLMTFL) traverse the membrane as a helical segment. Residues 80-87 (QRYGFSSM) lie on the Cytoplasmic side of the membrane. The helical transmembrane segment at 88 to 108 (GFNFLIAAFSLQWATLMQGFF) threads the bilayer. Over 109–121 (HGMHHGKIHVGVT) the chain is Extracellular. A helical transmembrane segment spans residues 122-142 (SMINADFCTGAVLISFGAVLG). Residues 143 to 149 (KTSPVQL) are Cytoplasmic-facing. The chain crosses the membrane as a helical span at residues 150–170 (LVMAILEVTLFAVNEYILLSI). At 171–176 (LGANDA) the chain is on the extracellular side. Residues 177–197 (GGSMTIHTFGAYFGLMVTRIL) form a helical membrane-spanning segment. The Cytoplasmic portion of the chain corresponds to 198-216 (HRPNLDKSKHKNSSVYHSD). The chain crosses the membrane as a helical span at residues 217 to 237 (LFAMIGTIFLWMFWPSFNSAI). Over 238-248 (TQYGDPQHRTA) the chain is Extracellular. Residues 249-269 (ANTYYSLAACTLATFGFSSLV) form a helical membrane-spanning segment. Topologically, residues 270-274 (NPEGK) are cytoplasmic. The helical transmembrane segment at 275–295 (LDMVHIQNAALAGGVAVGTAG) threads the bilayer. Glu296 is a topological domain (extracellular). A helical membrane pass occupies residues 297–317 (MMLTPFGSMIVGFLAGTISVL). At 318-340 (GYKYLTPFMESKLKIQDTCGIHN) the chain is on the cytoplasmic side. Residues 341-361 (LHGMPGILGAIVGAVTAALAS) traverse the membrane as a helical segment. Over 362–392 (RDVYGNGLDKVFLEAADNSQWSAQTKGGFQA) the chain is Extracellular. A helical transmembrane segment spans residues 393-413 (ISLAVTLGIALIGGLITGFLL). Topologically, residues 414–459 (KLPIYGTPPDTQCFEDAVYWEVPGEEEDHHELNEVSTQNEVEKLNS) are cytoplasmic. Positions 440 to 459 (EDHHELNEVSTQNEVEKLNS) are disordered.

This sequence belongs to the ammonium transporter (TC 2.A.49) family. Rh subfamily.

The protein resides in the basolateral cell membrane. It localises to the cytoplasmic vesicle membrane. Its function is as follows. Functions as an ammonia transporter. May play a role in the elimination of ammonia in the gill. The protein is Ammonium transporter Rh type B (rhbg) of Danio rerio (Zebrafish).